The sequence spans 419 residues: D-mannonate dehydratase (419 aa).

Positions 54 and 139 each coordinate substrate. The active-site Proton donor/acceptor is the Tyr-176. Asp-227 contacts Mg(2+). The Proton donor/acceptor role is filled by His-229. 2 residues coordinate Mg(2+): Glu-253 and Glu-279. 5 residues coordinate substrate: Glu-279, Arg-300, His-329, Asp-333, and Glu-356.

Belongs to the mandelate racemase/muconate lactonizing enzyme family. GalD subfamily. Mg(2+) is required as a cofactor.

It carries out the reaction D-mannonate = 2-dehydro-3-deoxy-D-gluconate + H2O. It functions in the pathway carbohydrate metabolism; pentose and glucuronate interconversion. Functionally, catalyzes the dehydration of D-mannonate. Has no detectable activity with a panel of 70 other acid sugars (in vitro). This Xanthomonas oryzae pv. oryzicola (strain BLS256) protein is D-mannonate dehydratase.